Reading from the N-terminus, the 100-residue chain is Phosphoribosylformylglycinamidine synthase subunit PurS (100 aa).

This sequence belongs to the PurS family. As to quaternary structure, homodimer. Part of the FGAM synthase complex composed of 1 PurL, 1 PurQ and 2 PurS subunits.

The protein localises to the cytoplasm. It catalyses the reaction N(2)-formyl-N(1)-(5-phospho-beta-D-ribosyl)glycinamide + L-glutamine + ATP + H2O = 2-formamido-N(1)-(5-O-phospho-beta-D-ribosyl)acetamidine + L-glutamate + ADP + phosphate + H(+). Its pathway is purine metabolism; IMP biosynthesis via de novo pathway; 5-amino-1-(5-phospho-D-ribosyl)imidazole from N(2)-formyl-N(1)-(5-phospho-D-ribosyl)glycinamide: step 1/2. Functionally, part of the phosphoribosylformylglycinamidine synthase complex involved in the purines biosynthetic pathway. Catalyzes the ATP-dependent conversion of formylglycinamide ribonucleotide (FGAR) and glutamine to yield formylglycinamidine ribonucleotide (FGAM) and glutamate. The FGAM synthase complex is composed of three subunits. PurQ produces an ammonia molecule by converting glutamine to glutamate. PurL transfers the ammonia molecule to FGAR to form FGAM in an ATP-dependent manner. PurS interacts with PurQ and PurL and is thought to assist in the transfer of the ammonia molecule from PurQ to PurL. The polypeptide is Phosphoribosylformylglycinamidine synthase subunit PurS (Synechocystis sp. (strain ATCC 27184 / PCC 6803 / Kazusa)).